A 280-amino-acid chain; its full sequence is Probable ketoamine kinase lp_1983 (280 aa).

87–89 (DWL) contacts ATP. Asp-189 serves as the catalytic Proton acceptor.

This sequence belongs to the fructosamine kinase family.

The enzyme catalyses N(6)-(D-ribulosyl)-L-lysine + ATP = N(6)-(3-O-phospho-D-ribulosyl)-L-lysine + ADP + H(+). It catalyses the reaction N-(D-ribulosyl)-cadaverine + ATP = N-(3-O-phospho-D-ribulosyl)-cadaverine + ADP + H(+). The catalysed reaction is N(6)-(D-erythrulosyl)-L-lysine + ATP = N(6)-(3-O-phospho-D-erythrulosyl)-L-lysine + ADP + H(+). It carries out the reaction N-(D-erythrulosyl)-cadaverine + ATP = N-(3-O-phospho-D-erythrulosyl)-cadaverine + ADP + H(+). The enzyme catalyses N(6)-D-ribulosyl-L-lysyl-[protein] + ATP = N(6)-(3-O-phospho-D-ribulosyl)-L-lysyl-[protein] + ADP + H(+). It catalyses the reaction N(6)-(D-erythrulosyl)-L-lysyl-[protein] + ATP = N(6)-(3-O-phospho-D-erythrulosyl)-L-lysyl-[protein] + ADP + H(+). Functionally, ketoamine kinase that phosphorylates ketoamines, such as erythruloselysine, erythrulosecadaverine, ribuloselysine and ribulosecadaverine, on the third carbon of the sugar moiety to generate ketoamine 3-phosphate. Has higher activity on free lysine (erythruloselysine and ribuloselysine), than on ribuloselysine and erythruloselysine residues on glycated proteins. The chain is Probable ketoamine kinase lp_1983 from Lactiplantibacillus plantarum (strain ATCC BAA-793 / NCIMB 8826 / WCFS1) (Lactobacillus plantarum).